Here is a 159-residue protein sequence, read N- to C-terminus: Ribosomal RNA large subunit methyltransferase H (159 aa).

S-adenosyl-L-methionine contacts are provided by residues L76, G108, and 127–132; that span reads FGLLTL.

The protein belongs to the RNA methyltransferase RlmH family. Homodimer.

It localises to the cytoplasm. The catalysed reaction is pseudouridine(1915) in 23S rRNA + S-adenosyl-L-methionine = N(3)-methylpseudouridine(1915) in 23S rRNA + S-adenosyl-L-homocysteine + H(+). Functionally, specifically methylates the pseudouridine at position 1915 (m3Psi1915) in 23S rRNA. This Streptococcus pyogenes serotype M18 (strain MGAS8232) protein is Ribosomal RNA large subunit methyltransferase H.